A 111-amino-acid chain; its full sequence is Small ribosomal subunit protein bS16 (111 aa).

It belongs to the bacterial ribosomal protein bS16 family.

The polypeptide is Small ribosomal subunit protein bS16 (Rickettsia prowazekii (strain Madrid E)).